Reading from the N-terminus, the 466-residue chain is ATP synthase subunit beta (466 aa).

ATP is bound at residue 152–159; sequence GGAGVGKT.

It belongs to the ATPase alpha/beta chains family. As to quaternary structure, F-type ATPases have 2 components, CF(1) - the catalytic core - and CF(0) - the membrane proton channel. CF(1) has five subunits: alpha(3), beta(3), gamma(1), delta(1), epsilon(1). CF(0) has three main subunits: a(1), b(2) and c(9-12). The alpha and beta chains form an alternating ring which encloses part of the gamma chain. CF(1) is attached to CF(0) by a central stalk formed by the gamma and epsilon chains, while a peripheral stalk is formed by the delta and b chains.

Its subcellular location is the cell inner membrane. The catalysed reaction is ATP + H2O + 4 H(+)(in) = ADP + phosphate + 5 H(+)(out). Produces ATP from ADP in the presence of a proton gradient across the membrane. The catalytic sites are hosted primarily by the beta subunits. This Sulfurovum sp. (strain NBC37-1) protein is ATP synthase subunit beta.